The chain runs to 974 residues: Ephrin type-B receptor 3 (974 aa).

Residues 1–16 (MLPAVFVILALSAVQG) form the signal peptide. Residues 17–534 (LEETLMDTKW…RSSLQEQVPM (518 aa)) are Extracellular-facing. Residues 18-196 (EETLMDTKWT…FFKKCPRTTA (179 aa)) enclose the Eph LBD domain. Cysteine 60 and cysteine 178 are oxidised to a cystine. Fibronectin type-III domains are found at residues 318 to 426 (VPSA…TNQA) and 427 to 522 (APSS…IAED). Asparagine 330 and asparagine 420 each carry an N-linked (GlcNAc...) asparagine glycan. The helical transmembrane segment at 535 to 555 (VVGSVTAGLIFIIAVVIIVIV) threads the bilayer. Over 556 to 974 (CFSRKQRNDS…QMSQTLPVQV (419 aa)) the chain is Cytoplasmic. Tyrosine 590 bears the Phosphotyrosine; by autocatalysis mark. The Protein kinase domain maps to 609–872 (VKIEEVIGAG…QIVSSLDKLI (264 aa)). Residues 615-623 (IGAGEFGEV) and lysine 641 contribute to the ATP site. The active-site Proton acceptor is aspartate 734. The region spanning 901–965 (TTFPTVSDWL…LNSVQDMRLQ (65 aa)) is the SAM domain. Positions 972 to 974 (VQV) match the PDZ-binding motif.

This sequence belongs to the protein kinase superfamily. Tyr protein kinase family. Ephrin receptor subfamily. As to quaternary structure, heterotetramer upon binding of the ligand. The heterotetramer is composed of an ephrin dimer and a receptor dimer. Oligomerization is probably required to induce biological responses. Phosphorylated. Autophosphorylates upon ligand-binding. Autophosphorylation on Tyr-590 is required for interaction with SH2 domain-containing proteins. In terms of tissue distribution, expressed in the embryo in pre-somitic mesoderm, caudal somites, midbrain, and cement gland. Most abundant in adult brain, eye, heart, lung and ovary. Lower levels in intestine, kidney, oviduct and pharynx.

The protein resides in the cell membrane. The protein localises to the cell projection. Its subcellular location is the dendrite. It carries out the reaction L-tyrosyl-[protein] + ATP = O-phospho-L-tyrosyl-[protein] + ADP + H(+). Functionally, receptor tyrosine kinase which binds promiscuously transmembrane ephrin-B family ligands residing on adjacent cells, leading to contact-dependent bidirectional signaling into neighboring cells. The signaling pathway downstream of the receptor is referred to as forward signaling while the signaling pathway downstream of the ephrin ligand is referred to as reverse signaling. Generally has an overlapping and redundant function with EPHB2. Like EPHB2, functions in axon guidance during development. In addition to its role in axon guidance also plays an important redundant role with other ephrin-B receptors in development and maturation of dendritic spines and the formation of excitatory synapses. May control other aspects of development through regulation of cell migration and positioning. The sequence is that of Ephrin type-B receptor 3 (ephb3) from Xenopus laevis (African clawed frog).